The primary structure comprises 122 residues: MIQQESRLRVADNSGAKEILTIRVLGGSGRRYAGIGDIIVATVKDAIPGANVKKGEVVKAVIVRQKKEKRRADGSYIRFDENAAVLIKPSGEPRGTRIFGPVGRELRDKKYMKIISLAPEVL.

The protein belongs to the universal ribosomal protein uL14 family. As to quaternary structure, part of the 50S ribosomal subunit. Forms a cluster with proteins L3 and L19. In the 70S ribosome, L14 and L19 interact and together make contacts with the 16S rRNA in bridges B5 and B8.

Binds to 23S rRNA. Forms part of two intersubunit bridges in the 70S ribosome. The sequence is that of Large ribosomal subunit protein uL14 from Saccharopolyspora erythraea (strain ATCC 11635 / DSM 40517 / JCM 4748 / NBRC 13426 / NCIMB 8594 / NRRL 2338).